The following is a 167-amino-acid chain: S-ribosylhomocysteine lyase (167 aa).

Fe cation contacts are provided by histidine 54, histidine 58, and cysteine 128.

This sequence belongs to the LuxS family. In terms of assembly, homodimer. Requires Fe cation as cofactor.

It catalyses the reaction S-(5-deoxy-D-ribos-5-yl)-L-homocysteine = (S)-4,5-dihydroxypentane-2,3-dione + L-homocysteine. Its function is as follows. Involved in the synthesis of autoinducer 2 (AI-2) which is secreted by bacteria and is used to communicate both the cell density and the metabolic potential of the environment. The regulation of gene expression in response to changes in cell density is called quorum sensing. Catalyzes the transformation of S-ribosylhomocysteine (RHC) to homocysteine (HC) and 4,5-dihydroxy-2,3-pentadione (DPD). This chain is S-ribosylhomocysteine lyase, found in Haemophilus influenzae (strain PittEE).